Reading from the N-terminus, the 352-residue chain is Ion-translocating oxidoreductase complex subunit D (352 aa).

Transmembrane regions (helical) follow at residues 20–40, 42–62, 89–109, and 123–143; these read IMLLVLLAAVPGIAAQLCFFG, GTLVQILLASVSALLAEALVL, IPPLAPWWMVVLGTVFAVIIA, and PAMIGYVVLLISFPVQMTSWL. Threonine 187 carries the post-translational modification FMN phosphoryl threonine. 5 consecutive transmembrane segments (helical) span residues 215-235, 242-262, 267-287, 301-321, and 322-342; these read LAGAGWQWVNLAWLAGGVWLL, WHIPLSFLVTLALCATLGWLF, LAAPQIHLLSGATMLGAFFIL, LIFGALAGLLVWLIRSFGGYP, and DGVAFAVLLANITVPLIDYYT.

This sequence belongs to the NqrB/RnfD family. In terms of assembly, the complex is composed of six subunits: RsxA, RsxB, RsxC, RsxD, RsxE and RsxG. The cofactor is FMN.

Its subcellular location is the cell inner membrane. Functionally, part of a membrane-bound complex that couples electron transfer with translocation of ions across the membrane. Required to maintain the reduced state of SoxR. This is Ion-translocating oxidoreductase complex subunit D from Escherichia coli O7:K1 (strain IAI39 / ExPEC).